The chain runs to 219 residues: KP6 killer toxin (219 aa).

The signal sequence occupies residues 1–19 (MLIFSVLMYLGLLLAGASA). Residues 20 to 27 (LPNGLSPR) constitute a propeptide that is removed on maturation. Intrachain disulfides connect C32/C39, C43/C101, C45/C92, and C62/C78. A glycan (N-linked (GlcNAc...) asparagine; by host) is linked at N98. Positions 106–138 (KRTIQDSATDTVDLGAELHRDDPPPTASDIGKR) are excised as a propeptide. Positions 120–142 (GAELHRDDPPPTASDIGKRGKRP) are disordered.

In terms of assembly, heterodimer of two small polypeptides that are not covalently linked.

It localises to the secreted. In terms of biological role, this protein is lethal to sensitive cells of the same or related species. The KP6 alpha subunit is known to recognize some cellular receptors before interaction of the complex with KP6 beta, precipitating cell death. In Ustilago maydis P6 virus (UmV6), this protein is KP6 killer toxin.